Reading from the N-terminus, the 95-residue chain is Pyruvate dehydrogenase inhibitor (95 aa).

This sequence belongs to the HesB/IscA family. As to quaternary structure, interacts with the E1 module of pyruvate dehydrogenase (PdhA-PdhB).

Acts as an inhibitor of the pyruvate dehydrogenase. Overexpression does not affect growth with glucose as the main carbon source, but it leads to a dramatic growth defect when cells are grown with pyruvate as the sole carbon source. This Bacillus subtilis (strain 168) protein is Pyruvate dehydrogenase inhibitor.